Reading from the N-terminus, the 242-residue chain is 2-C-methyl-D-erythritol 4-phosphate cytidylyltransferase (242 aa).

The protein belongs to the IspD/TarI cytidylyltransferase family. IspD subfamily.

The enzyme catalyses 2-C-methyl-D-erythritol 4-phosphate + CTP + H(+) = 4-CDP-2-C-methyl-D-erythritol + diphosphate. It participates in isoprenoid biosynthesis; isopentenyl diphosphate biosynthesis via DXP pathway; isopentenyl diphosphate from 1-deoxy-D-xylulose 5-phosphate: step 2/6. Functionally, catalyzes the formation of 4-diphosphocytidyl-2-C-methyl-D-erythritol from CTP and 2-C-methyl-D-erythritol 4-phosphate (MEP). This Shewanella loihica (strain ATCC BAA-1088 / PV-4) protein is 2-C-methyl-D-erythritol 4-phosphate cytidylyltransferase.